Here is a 309-residue protein sequence, read N- to C-terminus: Transaldolase (309 aa).

The active-site Schiff-base intermediate with substrate is the lysine 125.

It belongs to the transaldolase family. Type 1 subfamily. As to quaternary structure, homodimer.

It localises to the cytoplasm. The enzyme catalyses D-sedoheptulose 7-phosphate + D-glyceraldehyde 3-phosphate = D-erythrose 4-phosphate + beta-D-fructose 6-phosphate. Its pathway is carbohydrate degradation; pentose phosphate pathway; D-glyceraldehyde 3-phosphate and beta-D-fructose 6-phosphate from D-ribose 5-phosphate and D-xylulose 5-phosphate (non-oxidative stage): step 2/3. Functionally, transaldolase is important for the balance of metabolites in the pentose-phosphate pathway. This Pseudomonas syringae pv. tomato (strain ATCC BAA-871 / DC3000) protein is Transaldolase.